The primary structure comprises 365 residues: Putative clathrin assembly protein At4g40080 (365 aa).

One can recognise an ENTH domain in the interval 29–167; the sequence is NTKSKTLSFH…STSRIMGFFI (139 aa).

The protein localises to the membrane. It localises to the clathrin-coated pit. It is found in the golgi apparatus. The protein resides in the cytoplasmic vesicle. Its subcellular location is the clathrin-coated vesicle. This chain is Putative clathrin assembly protein At4g40080, found in Arabidopsis thaliana (Mouse-ear cress).